The sequence spans 304 residues: MIDNQKYVILSLELHLFFSRIMKEHALFLEAGFTNKNYNLAMEADHYKKQFEDLLSYTVSASNGIIRPDILYSEELVTTLTSVAEQKTEEFTGIEINKNITTRELNLQSGVNPQVGQDLVNYVAQLNSDAIRLLDGLINFKERVLDGVLSCTIFTSNYPLLLEHIIHEANLYRSYVVDLENKIDIESKNAKEIELFWDHIMMEHALFMRGLLDPSEGELINTSNDFAIKFNELIEKTNEMTDSNIKNITEETLNETVEFKDFKEAGASGIEQCKIKSIILPLLADHVLREANHYIRILESYKNM.

The protein localises to the spore coat. It localises to the spore. It is found in the perispore. Functionally, contributes to the formation of thick-exosporium spores. The chain is Spore coat protein CotB from Clostridioides difficile (strain 630) (Peptoclostridium difficile).